The sequence spans 154 residues: Large ribosomal subunit protein eL24 (154 aa).

Residues Ala-92–Arg-154 form a disordered region. Over residues Gln-96–Gly-122 the composition is skewed to basic and acidic residues. Over residues Lys-129–Arg-154 the composition is skewed to low complexity.

It belongs to the eukaryotic ribosomal protein eL24 family.

The chain is Large ribosomal subunit protein eL24 (RPL24) from Branchiostoma belcheri (Amphioxus).